A 151-amino-acid polypeptide reads, in one-letter code: Ribonuclease H (151 aa).

Residues 5-146 (ALPHVTIFTD…ADQLAREGVA (142 aa)) enclose the RNase H type-1 domain. Residues Asp14, Glu52, Asp74, and Asp138 each contribute to the Mg(2+) site.

The protein belongs to the RNase H family. As to quaternary structure, monomer. It depends on Mg(2+) as a cofactor.

It is found in the cytoplasm. It catalyses the reaction Endonucleolytic cleavage to 5'-phosphomonoester.. In terms of biological role, endonuclease that specifically degrades the RNA of RNA-DNA hybrids. In Nitrobacter hamburgensis (strain DSM 10229 / NCIMB 13809 / X14), this protein is Ribonuclease H.